Here is a 636-residue protein sequence, read N- to C-terminus: 1-deoxy-D-xylulose-5-phosphate synthase (636 aa).

Thiamine diphosphate-binding positions include H74 and 115 to 117; that span reads AHS. D146 is a binding site for Mg(2+). Thiamine diphosphate contacts are provided by residues 147 to 148, N176, Y287, and E369; that span reads GS. Mg(2+) is bound at residue N176.

This sequence belongs to the transketolase family. DXPS subfamily. As to quaternary structure, homodimer. It depends on Mg(2+) as a cofactor. Requires thiamine diphosphate as cofactor.

It carries out the reaction D-glyceraldehyde 3-phosphate + pyruvate + H(+) = 1-deoxy-D-xylulose 5-phosphate + CO2. It participates in metabolic intermediate biosynthesis; 1-deoxy-D-xylulose 5-phosphate biosynthesis; 1-deoxy-D-xylulose 5-phosphate from D-glyceraldehyde 3-phosphate and pyruvate: step 1/1. In terms of biological role, catalyzes the acyloin condensation reaction between C atoms 2 and 3 of pyruvate and glyceraldehyde 3-phosphate to yield 1-deoxy-D-xylulose-5-phosphate (DXP). The chain is 1-deoxy-D-xylulose-5-phosphate synthase from Polaromonas naphthalenivorans (strain CJ2).